Consider the following 946-residue polypeptide: Bifunctional glutamine synthetase adenylyltransferase/adenylyl-removing enzyme (946 aa).

The adenylyl removase stretch occupies residues 1–440; sequence MKPLSSPLQQ…VFNELIGDDE (440 aa). Positions 449-946 are adenylyl transferase; the sequence is SEQWRELWQD…ASWQKWLVEE (498 aa).

The protein belongs to the GlnE family. The cofactor is Mg(2+).

The enzyme catalyses [glutamine synthetase]-O(4)-(5'-adenylyl)-L-tyrosine + phosphate = [glutamine synthetase]-L-tyrosine + ADP. It catalyses the reaction [glutamine synthetase]-L-tyrosine + ATP = [glutamine synthetase]-O(4)-(5'-adenylyl)-L-tyrosine + diphosphate. Involved in the regulation of glutamine synthetase GlnA, a key enzyme in the process to assimilate ammonia. When cellular nitrogen levels are high, the C-terminal adenylyl transferase (AT) inactivates GlnA by covalent transfer of an adenylyl group from ATP to specific tyrosine residue of GlnA, thus reducing its activity. Conversely, when nitrogen levels are low, the N-terminal adenylyl removase (AR) activates GlnA by removing the adenylyl group by phosphorolysis, increasing its activity. The regulatory region of GlnE binds the signal transduction protein PII (GlnB) which indicates the nitrogen status of the cell. The polypeptide is Bifunctional glutamine synthetase adenylyltransferase/adenylyl-removing enzyme (Escherichia coli (strain SE11)).